The primary structure comprises 2643 residues: BAH and coiled-coil domain-containing protein 1 (2643 aa).

2 disordered regions span residues 23–45 (SAAA…HFQP) and 84–106 (SAAS…RGSH). Position 220 is an N6-acetyllysine (lysine 220). Basic and acidic residues-rich tracts occupy residues 224-249 (KEKV…DRQK) and 683-702 (ERPD…DGEV). Disordered stretches follow at residues 224–273 (KEKV…SCEG), 674–704 (PATK…EVRQ), 721–758 (GRPD…LESE), 985–1023 (RKPE…PSSA), and 1038–1299 (TLKT…KALP). The segment covering 985–1003 (RKPEDRHMELEEAAQEKTP) has biased composition (basic and acidic residues). Residues 1133–1149 (RPEPPRTFLPGEPPPCS) are compositionally biased toward pro residues. Residues 1210–1224 (ATGQTNSTQGGMQNE) show a composition bias toward polar residues. The span at 1269 to 1284 (QEEETQLEESGGDSEV) shows a compositional bias: acidic residues. Coiled coils occupy residues 1346–1373 (ALLS…DVLA) and 1437–1486 (LKAA…SSRS). Positions 1466–1484 (QRELARLQRRHDHEREESS) are enriched in basic and acidic residues. 8 disordered regions span residues 1466–1520 (QREL…DSKK), 1537–1559 (GDEP…QSVS), 1604–1641 (KEAA…GREM), 1746–1781 (RAPG…SRDT), 1875–1896 (FDED…GVQL), 2055–2124 (SSCR…HFLG), 2322–2341 (CPSS…TGVP), and 2349–2386 (SMSS…SDDE). The span at 1487–1501 (PARRGPGRPRKRKHS) shows a compositional bias: basic residues. Over residues 1631–1641 (PHPDGDSGREM) the composition is skewed to basic and acidic residues. A compositionally biased stretch (basic residues) spans 1757–1767 (GKKKAKGKVKT). Acidic residues predominate over residues 1875–1892 (FDEDDTSFSDEEEEEEEA). A compositionally biased stretch (low complexity) spans 2349 to 2374 (SMSSSSSGSSTSSSSGSVSTSSLCSS). Residues 2375 to 2386 (DNEDSSYSSDDE) are compositionally biased toward acidic residues. The BAH domain maps to 2517-2637 (ETLRIGDCAV…PTTGRLVTAD (121 aa)).

The chain is BAH and coiled-coil domain-containing protein 1 (Bahcc1) from Mus musculus (Mouse).